We begin with the raw amino-acid sequence, 670 residues long: DNA ligase (670 aa).

NAD(+) contacts are provided by residues 34–38 (DFEFD), 83–84 (SL), and Glu113. Lys115 (N6-AMP-lysine intermediate) is an active-site residue. NAD(+) is bound by residues Arg136, Glu173, Lys288, and Lys312. 4 residues coordinate Zn(2+): Cys406, Cys409, Cys424, and Cys430. The region spanning 591–670 (PESDKFAGKS…EAEFISLLNS (80 aa)) is the BRCT domain.

This sequence belongs to the NAD-dependent DNA ligase family. LigA subfamily. Requires Mg(2+) as cofactor. The cofactor is Mn(2+).

The enzyme catalyses NAD(+) + (deoxyribonucleotide)n-3'-hydroxyl + 5'-phospho-(deoxyribonucleotide)m = (deoxyribonucleotide)n+m + AMP + beta-nicotinamide D-nucleotide.. DNA ligase that catalyzes the formation of phosphodiester linkages between 5'-phosphoryl and 3'-hydroxyl groups in double-stranded DNA using NAD as a coenzyme and as the energy source for the reaction. It is essential for DNA replication and repair of damaged DNA. In Cytophaga hutchinsonii (strain ATCC 33406 / DSM 1761 / CIP 103989 / NBRC 15051 / NCIMB 9469 / D465), this protein is DNA ligase.